We begin with the raw amino-acid sequence, 96 residues long: uncharacterized protein (96 aa).

A CBS domain is found at M57–L96.

This is an uncharacterized protein from Methanobacterium ivanovii.